Consider the following 837-residue polypeptide: Intestinal mucin-like protein (837 aa).

4 tandem repeats follow at residues 17-27 (PSTPSTPPPST), 28-38 (PTTPTSSQTTT), 39-50 (PSTPSTTSSKST), and 51-62 (PSTPQSTSSKST). Positions 17-70 (PSTPSTPPPSTPTTPTSSQTTTPSTPSTTSSKSTPSTPQSTSSKSTPSTPPKTT) are 5 X 11 AA approximate tandem repeats. The segment at 17–75 (PSTPSTPPPSTPTTPTSSQTTTPSTPSTTSSKSTPSTPQSTSSKSTPSTPPKTTLPGCL) is disordered. Over residues 29–70 (TTPTSSQTTTPSTPSTTSSKSTPSTPQSTSSKSTPSTPPKTT) the composition is skewed to low complexity. The 5; truncated repeat unit spans residues 63-70 (PSTPPKTT). 2 N-linked (GlcNAc...) asparagine glycosylation sites follow: N91 and N164. The VWFD domain maps to 141–324 (CYCTGWGDPH…VNDPSKPHCP (184 aa)). 3 cysteine pairs are disulfide-bonded: C143–C284, C165–C323, and C189–C197. Positions 149–837 (PHFVTFDGLY…RSSPRLLGRK (689 aa)) are probably important for disulfide-bond mediated mucin polymerization (link domain). N-linked (GlcNAc...) asparagine glycans are attached at residues N278, N289, N344, N410, N444, N515, N538, N612, N627, N695, N727, and N749. 2 VWFC domains span residues 472–543 (CGCV…TSCK) and 581–648 (GVCV…KKCQ). Cystine bridges form between C732–C779, C746–C793, C755–C809, and C759–C811. Residues 732–817 (CSAIPVMKEI…SCLCQGTVCE (86 aa)) form the CTCK domain.

In terms of assembly, multimeric. In terms of tissue distribution, coats the epithelia of the intestines.

The protein resides in the secreted. This is Intestinal mucin-like protein from Rattus norvegicus (Rat).